We begin with the raw amino-acid sequence, 375 residues long: tRNA-specific 2-thiouridylase MnmA (375 aa).

ATP-binding positions include 9-16 (AMSGGVDS) and Leu-35. The Nucleophile role is filled by Cys-105. Cys-105 and Cys-201 are disulfide-bonded. Gly-129 is an ATP binding site. An interaction with tRNA region spans residues 151 to 153 (KNQ). The active-site Cysteine persulfide intermediate is the Cys-201. The interaction with tRNA stretch occupies residues 307 to 308 (RY).

Belongs to the MnmA/TRMU family.

The protein resides in the cytoplasm. It catalyses the reaction S-sulfanyl-L-cysteinyl-[protein] + uridine(34) in tRNA + AH2 + ATP = 2-thiouridine(34) in tRNA + L-cysteinyl-[protein] + A + AMP + diphosphate + H(+). Catalyzes the 2-thiolation of uridine at the wobble position (U34) of tRNA, leading to the formation of s(2)U34. In Leptospira interrogans serogroup Icterohaemorrhagiae serovar Lai (strain 56601), this protein is tRNA-specific 2-thiouridylase MnmA.